Reading from the N-terminus, the 602-residue chain is Elongation factor 4 (602 aa).

Residues 2 to 184 (KHIRNFSIIA…AIVAKVPAPR (183 aa)) enclose the tr-type G domain. Residues 14–19 (DHGKST) and 131–134 (NKMD) each bind GTP.

It belongs to the TRAFAC class translation factor GTPase superfamily. Classic translation factor GTPase family. LepA subfamily.

Its subcellular location is the cell inner membrane. The catalysed reaction is GTP + H2O = GDP + phosphate + H(+). Functionally, required for accurate and efficient protein synthesis under certain stress conditions. May act as a fidelity factor of the translation reaction, by catalyzing a one-codon backward translocation of tRNAs on improperly translocated ribosomes. Back-translocation proceeds from a post-translocation (POST) complex to a pre-translocation (PRE) complex, thus giving elongation factor G a second chance to translocate the tRNAs correctly. Binds to ribosomes in a GTP-dependent manner. The protein is Elongation factor 4 of Verminephrobacter eiseniae (strain EF01-2).